A 121-amino-acid chain; its full sequence is Protein TusC (121 aa).

The protein belongs to the DsrF/TusC family. In terms of assembly, heterohexamer, formed by a dimer of trimers. The hexameric TusBCD complex contains 2 copies each of TusB, TusC and TusD. The TusBCD complex interacts with TusE.

It localises to the cytoplasm. Functionally, part of a sulfur-relay system required for 2-thiolation of 5-methylaminomethyl-2-thiouridine (mnm(5)s(2)U) at tRNA wobble positions. The chain is Protein TusC from Yersinia pestis bv. Antiqua (strain Antiqua).